A 168-amino-acid chain; its full sequence is Ribosome maturation factor RimM (168 aa).

Residues 95–168 (EEGYYWSDLI…RITVDWGLDY (74 aa)) enclose the PRC barrel domain.

Belongs to the RimM family. In terms of assembly, binds ribosomal protein uS19.

The protein localises to the cytoplasm. Its function is as follows. An accessory protein needed during the final step in the assembly of 30S ribosomal subunit, possibly for assembly of the head region. Essential for efficient processing of 16S rRNA. May be needed both before and after RbfA during the maturation of 16S rRNA. It has affinity for free ribosomal 30S subunits but not for 70S ribosomes. The sequence is that of Ribosome maturation factor RimM from Nitrosospira multiformis (strain ATCC 25196 / NCIMB 11849 / C 71).